The sequence spans 213 residues: MEPDFWHARWQTKQIQGFHEGKANAFLVKHFPRLPVAPGARVFVPLCGKTRDIAWLLGEGFRVAGAELSRIAVEELFAELGVVPEVTTQGAHTRFSAPGLDIFQGDIFALTPDTLGPVDAVWDRAALVALPKDMRARYAPHLVALTDTAPQLLVCFEYDQPLLAGPPFSVPPEETRTLYGADYVVAAIDTAPVPGGLKGQCEAVEHVWLLERA.

S-adenosyl-L-methionine contacts are provided by tryptophan 10, leucine 46, glutamate 67, and arginine 124.

This sequence belongs to the class I-like SAM-binding methyltransferase superfamily. TPMT family.

It is found in the cytoplasm. The catalysed reaction is S-adenosyl-L-methionine + a thiopurine = S-adenosyl-L-homocysteine + a thiopurine S-methylether.. The sequence is that of Thiopurine S-methyltransferase from Xanthobacter autotrophicus (strain ATCC BAA-1158 / Py2).